A 130-amino-acid polypeptide reads, in one-letter code: UPF0102 protein SCO5602 (130 aa).

The protein belongs to the UPF0102 family.

This Streptomyces coelicolor (strain ATCC BAA-471 / A3(2) / M145) protein is UPF0102 protein SCO5602.